The primary structure comprises 466 residues: Peptidoglycan-N-acetylglucosamine deacetylase PgdA (466 aa).

Topologically, residues 1–5 (MKIRW) are cytoplasmic. Residues 6–26 (IRLSLVAILIIAVVFIGVIGF) form a helical membrane-spanning segment. Residues 27–466 (QKYQFSKSRN…FDKTDSRMVK (440 aa)) are Extracellular-facing. In terms of domain architecture, NodB homology spans 266 to 440 (KRIALTFDDG…KLKSQGYEFV (175 aa)). Residue Asp273 is the Proton acceptor of the active site. The Zn(2+) site is built by Asp274, His324, and His328. Substrate is bound at residue Tyr365. Residue His415 is the Proton donor of the active site.

Homodimer. Interacts (via transmembrane domain) with PbpA1 (via transmembrane domain); the interaction is important for the peptidoglycan N-deacetylase function of this protein. Requires Zn(2+) as cofactor.

Its subcellular location is the cell membrane. The protein resides in the secreted. The protein localises to the cell wall. It catalyses the reaction peptidoglycan-N-acetyl-D-glucosamine + H2O = peptidoglycan-D-glucosamine + acetate.. Catalyzes the deacetylation of N-acetylglucosamine (GlcNAc) residues in peptidoglycan (PG). Also deacetylates N-acetylated PG. Does not deacetylate N-acetylmuramic acid. Confers host lysozyme resistance. Critical for virulence and escape from innate immune response of the host. Required for intracellular survival of bacteria in macrophages of the host. Required for successful host colonization. Controls the production of inflammatory mediators in the bone marrow derived macrophages (BMMs) of the infected mouse. Suppresses Toll-like receptor 2 (TLR2)-dependent secretion of interleukin 6 (IL-6) and interferon-beta (IFN-beta) in the macrophages of the infected mouse. May decrease accessibility of pattern recognition receptors (PRRs) such as nucleotide-binding oligomerization domain protein (NOD) 1 of the host to the bacterial cell wall components. Protects cells from autolysis induced by lysozyme or by other autolysis-inducing agents. This chain is Peptidoglycan-N-acetylglucosamine deacetylase PgdA, found in Listeria monocytogenes serotype 1/2a (strain 10403S).